A 397-amino-acid chain; its full sequence is MTPSQWLDIAVLAVAFIAAISGWRAGALGSMLSFGGVLLGATAGVLLAPHIVSQISAPRAKLFAALFLILALVVVGEVAGVVLGRAVRGAIRNRPIRLIDSVIGVGVQLVVVLTAAWLLAMPLTQSKEQPELAAAVKGSRVLARVNEAAPTWLKTVPKRLSALLNTSGLPAVLEPFSRTPVIPVASPDPALVNNPVVAATEPSVVKIRSLAPRCQKVLEGTGFVISPDRVMTNAHVVAGSNNVTVYAGDKPFEATVVSYDPSVDVAILAVPHLPPPPLVFAAEPAKTGADVVVLGYPGGGNFTATPARIREAIRLSGPDIYGDPEPVTRDVYTIRADVEQGDSGGPLIDLNGQVLGVVFGAAIDDAETGFVLTAGEVAGQLAKIGATQPVGTGACVS.

4 helical membrane passes run 9 to 29, 32 to 52, 62 to 82, and 102 to 122; these read IAVL…GALG, LSFG…PHIV, LFAA…AGVV, and VIGV…LAMP. A disulfide bond links Cys214 and Cys395. The active-site Proton acceptor is the His235. Asp264 is an active-site residue. The active-site Charge relay system is the Ser343.

Belongs to the peptidase S1C family. As to quaternary structure, monomer.

It localises to the membrane. Required for M.tuberculosis resistance to oxidative stress in addition to its role in resistance to acid, which is essential for virulence. The sequence is that of Serine protease MT3772 from Mycobacterium tuberculosis (strain CDC 1551 / Oshkosh).